The primary structure comprises 185 residues: MERNNRNEGTHEEEQCSLSDIIYSFCSENHSELNPLQEIFGVTKNNDHEKHDEEPDEESYRMAKRQRSMEYRMMMEKKRRKEIKDKVDILQGLMPNHCTKPDLASKLENIIEYIKSLKYQVDVMSMAYTTTPVYTPPFYAAAQAPCMSPWGYYTPGVPMMPQQNMTYIPQYPQVYGTVPPNQTQP.

A bHLH domain is found at 67 to 117; that stretch reads RSMEYRMMMEKKRRKEIKDKVDILQGLMPNHCTKPDLASKLENIIEYIKSL.

Belongs to the bHLH protein family. In terms of assembly, homodimer.

The protein resides in the nucleus. Its function is as follows. Transcription factor involved in somatic embryogenesis. Acts as a positive regulator of somatic embryo formation. Acts as a positive regulator of ECP63 by targeting its promoter and inducing its expression. The sequence is that of Transcription factor bHLH109 (BHLH109) from Arabidopsis thaliana (Mouse-ear cress).